The primary structure comprises 1006 residues: E3 ubiquitin-protein ligase MIB1 (1006 aa).

The MIB/HERC2 1 domain maps to 6–74 (NNRVMVEGVG…AYDLRILDSA (69 aa)). The segment at 80–132 (HDGTMCDTCRQQPIIGIRWKCAECTNYDLCTVCYHGDKHHLRHRFYRITTPGS) adopts a ZZ-type zinc-finger fold. Residues cysteine 85, cysteine 88, cysteine 100, cysteine 103, cysteine 109, cysteine 112, histidine 118, and histidine 122 each contribute to the Zn(2+) site. Residues 143 to 221 (SKKITARGIF…MSDLKCVQDA (79 aa)) form the MIB/HERC2 2 domain. Serine 408 carries the phosphoserine modification. ANK repeat units follow at residues 430–460 (DLNEELVKAAANGDVAKVEDLLKRPDVDVNG), 463–492 (AGHTAMQAASQNGHVDILKLLLKQNVDVEA), 496–525 (DGDRAVHHAAFGDEGAVIEVLHRGSADLNA), 529–558 (RRQTPLHIAVNKGHLQVVKTLLDFGCHPSL), 562–591 (EGDTPLHDAISKKRDDILAVLLEAGADVTI), 595–627 (NGFNALHHAALRGNPSAMRVLLSKLPRPWIVDE), 631–661 (DGYTALHLAALNNHVEVAELLVHQGNANLDI), 665–694 (NQQTALHLAVERQHTQIVRLLVRAGAKLDI), and 698–729 (DGDTPLHEALRHHTLSQLRQLQDMQDVGKVDA). 2 RING-type zinc fingers span residues 819 to 854 (CMVCSDMKRDTLFGPCGHIATCSLCSPRVKKCLICK) and 866 to 901 (CVVCSDKKAAVLFQPCGHMCACENCASLMKKCVQCR). The stretch at 935 to 962 (QKDKDNTNVNADVQKLQQQLQDIKEQTM) forms a coiled coil. Residues 963-996 (CPVCLDRLKNMIFLCGHGTCQLCGDRMSECPICR) form an RING-type 3 zinc finger.

Interacts with CEP131 and PCM1. Ubiquitinated; this modification is inhibited in response to cellular stress, such as ultraviolet light (UV) radiation or heat shock. Ubiquitinated; possibly via autoubiquitination. Detected in all tissues tested. Present in embryo, embryonic stem cells, bladder, skeletal muscle, bladder, uterus, testis, stomach, colon, ileum, trachea, lung, aorta, kidney, spleen, liver and vas deferens (at protein level). Highly expressed in testis.

It is found in the cytoplasm. It localises to the cytoskeleton. Its subcellular location is the microtubule organizing center. The protein localises to the centrosome. The protein resides in the centriolar satellite. It is found in the cell membrane. The enzyme catalyses S-ubiquitinyl-[E2 ubiquitin-conjugating enzyme]-L-cysteine + [acceptor protein]-L-lysine = [E2 ubiquitin-conjugating enzyme]-L-cysteine + N(6)-ubiquitinyl-[acceptor protein]-L-lysine.. The protein operates within protein modification; protein ubiquitination. In terms of biological role, E3 ubiquitin-protein ligase that mediates ubiquitination of Delta receptors, which act as ligands of Notch proteins. Positively regulates the Delta-mediated Notch signaling by ubiquitinating the intracellular domain of Delta, leading to endocytosis of Delta receptors. Involved in ubiquitination of centriolar satellite CEP131, CEP290 and PCM1 proteins and hence inhibits primary cilium formation in proliferating cells. Mediates 'Lys-63'-linked polyubiquitination of TBK1, which probably participates in kinase activation. Probably mediates ubiquitination and subsequent proteasomal degradation of DAPK1, thereby antagonizing anti-apoptotic effects of DAPK1 to promote TNF-induced apoptosis. The sequence is that of E3 ubiquitin-protein ligase MIB1 (Mib1) from Mus musculus (Mouse).